The primary structure comprises 637 residues: MHLRIHARRSPPRRPAWTLGIWFLFWGCIVSSVWSSSNVASSSSTSSSPGSHSQHEHHFHGSKHHSVPISIYRSPVSLRGGHAGATYIFGKSGGLILYTWPANDRPSTRSDRLAVGFSTTVKDGILVRIDSAPGLGDFLQLHIEQGKIGVVFNIGTVDISIKEERTPVNDGKYHVVRFTRNGGNATLQVDNWPVNEHYPTGRQLTIFNTQAQIAIGGKDKGRLFQGQLSGLYYDGLKVLNMAAENNPNIKINGSVRLVGEVPSILGTTQTTSMPPEMSTTVMETTTTMATTTTRKNRSTASIQPTSDDLVSSAECSSDDEDFVECEPSTGGELVIPLLVEDPLATPPIATRAPSITLPPTFRPLLTIIETTKDSLSMTSEAGLPCLSDQGSDGCDDDGLVISGYGSGETFDSNLPPTDDEDFYTTFSLVTDKSLSTSIFEGGYKAHAPKWESKDFRPNKVSETSRTTTTSLSPELIRFTASSSSGMVPKLPAGKMNNRDLKPQPDIVLLPLPTAYELDSTKLKSPLITSPMFRNVPTANPTEPGIRRVPGASEVIRESSSTTGMVVGIVAAAALCILILLYAMYKYRNRDEGSYQVDETRNYISNSAQSNGTLMKEKQQSSKSGHKKQKNKDREYYV.

The signal sequence occupies residues 1-35; the sequence is MHLRIHARRSPPRRPAWTLGIWFLFWGCIVSSVWS. The Extracellular segment spans residues 36–562; the sequence is SSNVASSSST…EVIRESSSTT (527 aa). Residues 43–52 show a composition bias toward low complexity; sequence SSTSSSPGSH. Residues 43–65 form a disordered region; the sequence is SSTSSSPGSHSQHEHHFHGSKHH. The span at 55 to 65 shows a compositional bias: basic residues; sequence HEHHFHGSKHH. A Laminin G-like domain is found at 85-255; the sequence is ATYIFGKSGG…NPNIKINGSV (171 aa). Ca(2+) contacts are provided by aspartate 137 and isoleucine 154. An N-linked (GlcNAc...) asparagine glycan is attached at asparagine 184. Residues isoleucine 206 and asparagine 208 each coordinate Ca(2+). Residues asparagine 252 and asparagine 296 are each glycosylated (N-linked (GlcNAc...) asparagine). A disordered region spans residues 289-310; it reads ATTTTRKNRSTASIQPTSDDLV. Polar residues predominate over residues 298 to 310; the sequence is STASIQPTSDDLV. The O-linked (Xyl...) (heparan sulfate) serine glycan is linked to serine 312. A helical transmembrane segment spans residues 563–583; that stretch reads GMVVGIVAAAALCILILLYAM. Residues 584-637 lie on the Cytoplasmic side of the membrane; sequence YKYRNRDEGSYQVDETRNYISNSAQSNGTLMKEKQQSSKSGHKKQKNKDREYYV. A disordered region spans residues 605–637; it reads NSAQSNGTLMKEKQQSSKSGHKKQKNKDREYYV.

This sequence belongs to the neurexin family. Weakly interacts with CBLN1 and CBLN2. Very weak binding, if any, to CBLN4. Specific isoforms bind neuroligins NLGN1, NLGN2 and NLGN3. Interacts with CLSTN3. Post-translationally, processed by alpha-secretase leading to the formation of an extracellular soluble protein as well as a C-terminal membrane-embedded fragment (CTF). Proteolysis of these CTFs by gamma-secretase releases intracellular domains (ICDs) and extracellular peptides. O-glycosylated; contains heparan sulfate. Heparan sulfate attachment is required for synapse development by mediating interactions with neuroligins. As to expression, expressed in the blood vessel walls (at protein level).

The protein localises to the presynaptic cell membrane. Functionally, neuronal cell surface protein that may be involved in cell recognition and cell adhesion. May mediate intracellular signaling. Functions as part of a trans-synaptic complex by binding to cerebellins and postsynaptic GRID1. This interaction helps regulate the activity of NMDA and AMPA receptors at hippocampal synapses without affecting synapse formation. NRXN3B-CBLN2-GRID1 complex transduce presynaptic signals into postsynaptic AMPAR response. This is Neurexin-3-beta from Homo sapiens (Human).